Consider the following 64-residue polypeptide: UPF0434 protein MADE_1009415 (64 aa).

The protein belongs to the UPF0434 family.

In Alteromonas mediterranea (strain DSM 17117 / CIP 110805 / LMG 28347 / Deep ecotype), this protein is UPF0434 protein MADE_1009415.